Reading from the N-terminus, the 268-residue chain is Energy-coupling factor transporter transmembrane protein EcfT (268 aa).

The next 5 membrane-spanning stretches (helical) occupy residues 26 to 46 (IVTF…TYAW), 72 to 92 (IFWL…GTPI), 106 to 126 (ILNA…STIL), 149 to 169 (IGVP…FVPL), and 247 to 267 (VAFA…TWLH).

It belongs to the energy-coupling factor EcfT family. Forms a stable energy-coupling factor (ECF) transporter complex composed of 2 membrane-embedded substrate-binding proteins (S component), 2 ATP-binding proteins (A component) and 2 transmembrane proteins (T component). May be able to interact with more than 1 S component at a time.

It localises to the cell membrane. Transmembrane (T) component of an energy-coupling factor (ECF) ABC-transporter complex. Unlike classic ABC transporters this ECF transporter provides the energy necessary to transport a number of different substrates. This chain is Energy-coupling factor transporter transmembrane protein EcfT, found in Leuconostoc gelidum subsp. gasicomitatum (strain DSM 15947 / CCUG 46042 / CECT 5767 / JCM 12535 / LMG 18811 / NBRC 113245 / TB1-10) (Leuconostoc gasicomitatum).